A 202-amino-acid chain; its full sequence is Cutinase (202 aa).

An N-terminal signal peptide occupies residues 1-20; it reads MKTSAQQLLSALLLPLSVLA. A disulfide bridge links Cys-31 with Cys-106. Ser-117 serves as the catalytic Nucleophile. Cys-165 and Cys-172 form a disulfide bridge. The active site involves Asp-169. His-182 (proton donor/acceptor) is an active-site residue.

This sequence belongs to the cutinase family. The 2 disulfide bonds play a critical role in holding the catalytic residues in juxta-position; reduction of the disulfide bridges results in the complete inactivation of the enzyme.

It is found in the secreted. The enzyme catalyses cutin + H2O = cutin monomers.. Its function is as follows. Catalyzes the hydrolysis of complex carboxylic polyesters found in the cell wall of plants. Degrades cutin, a macromolecule that forms the structure of the plant cuticle. Allows pathogenic fungi to penetrate through the cuticular barrier into the host plant during the initial stage of fungal infection. This is Cutinase from Botryotinia fuckeliana (Noble rot fungus).